The primary structure comprises 313 residues: MLSSSSNRPISAHLTIHYKAIQEEEGEDMRSGAGSGGHHDDYFLESNRSPTPNKKHEFIKTVLNINDNDSEFSESCSPREKLHNEGACNTDLFGDFMSKRQQRLSNSMNIYDLYQCVHNLSPSNNNHQFIARRFSDSHIPSLHHRQQQQKVTTKNFVQPTKDIQRIASYAADSDQRVKYLPNYHQSAPSTALSAAESKAAVPRKLPDRDSTQNYVLKLQLSSPNSQPMSPRTRPGYRPSCSSSNCSSSSSSSACSSVSISDPNNITAYETNNVNPQFPSNQPLDISSPCARHHHRRNSIAVKFDKALYKKTTG.

2 disordered regions span residues 24–53 (EEGE…PTPN) and 190–291 (TALS…PCAR). The segment covering 211–229 (TQNYVLKLQLSSPNSQPMS) has biased composition (polar residues). A compositionally biased stretch (low complexity) spans 239-260 (SCSSSNCSSSSSSSACSSVSIS). Residues 261-284 (DPNNITAYETNNVNPQFPSNQPLD) are compositionally biased toward polar residues.

This is an uncharacterized protein from Saccharomyces cerevisiae (strain ATCC 204508 / S288c) (Baker's yeast).